The following is a 1058-amino-acid chain: Translation initiation factor IF-2 (1058 aa).

A compositionally biased stretch (basic and acidic residues) spans 1-12; the sequence is MNDTKTPGDKTL. Residues 1–468 form a disordered region; that stretch reads MNDTKTPGDK…MTGHRGMQES (468 aa). The segment covering 54–81 has biased composition (low complexity); sequence APGEAGAPSGTPAAAPAATPAPAAAAPR. Pro residues predominate over residues 82 to 95; it reads PATPAPAAPRPAAP. Residues 96-108 are compositionally biased toward low complexity; that stretch reads ATPAQPAAEAKAP. A compositionally biased stretch (pro residues) spans 109–119; it reads APAPTPAPAAP. 2 stretches are compositionally biased toward low complexity: residues 120–156 and 164–228; these read AAPVAEAPKVEAPAPVAAKPEAAPAAPVAEAPKVEVP and EPVA…QRPG. Gly residues predominate over residues 244 to 271; sequence RSGGPGSDRRGGPGGQNRPGQNRQGGSG. Residues 292-364 show a composition bias toward basic and acidic residues; sequence ARVREVEERR…ARKRFGEETG (73 aa). Over residues 368 to 396 the composition is skewed to low complexity; that stretch reads GASAPSTSTARPLTPRPAGTTTTTGAPAA. Over residues 452-461 the composition is skewed to basic residues; it reads FRRRTQRMTG. The tr-type G domain occupies 555–725; the sequence is PRPPVVTIMG…SLQSEVLDLK (171 aa). Positions 564-571 are G1; sequence GHVDHGKT. GTP is bound at residue 564 to 571; sequence GHVDHGKT. The tract at residues 589–593 is G2; the sequence is GITQH. Residues 611–614 form a G3 region; that stretch reads DTPG. Residues 611–615 and 665–668 contribute to the GTP site; these read DTPGH and NKID. Residues 665–668 are G4; sequence NKID. Residues 701–703 are G5; sequence SAT.

This sequence belongs to the TRAFAC class translation factor GTPase superfamily. Classic translation factor GTPase family. IF-2 subfamily.

It is found in the cytoplasm. In terms of biological role, one of the essential components for the initiation of protein synthesis. Protects formylmethionyl-tRNA from spontaneous hydrolysis and promotes its binding to the 30S ribosomal subunits. Also involved in the hydrolysis of GTP during the formation of the 70S ribosomal complex. The sequence is that of Translation initiation factor IF-2 from Azorhizobium caulinodans (strain ATCC 43989 / DSM 5975 / JCM 20966 / LMG 6465 / NBRC 14845 / NCIMB 13405 / ORS 571).